Consider the following 395-residue polypeptide: S-adenosylmethionine synthase (395 aa).

His14 provides a ligand contact to ATP. Residue Asp16 coordinates Mg(2+). Residue Glu42 coordinates K(+). L-methionine is bound by residues Glu55 and Gln98. Residues 98–108 (QSPDIALGVDK) are flexible loop. ATP-binding positions include 175-177 (DGK), 242-243 (RF), Asp251, 257-258 (RK), Ala274, and Lys278. Asp251 is a binding site for L-methionine. Lys282 is an L-methionine binding site.

The protein belongs to the AdoMet synthase family. In terms of assembly, homotetramer; dimer of dimers. Mg(2+) serves as cofactor. Requires K(+) as cofactor.

Its subcellular location is the cytoplasm. It carries out the reaction L-methionine + ATP + H2O = S-adenosyl-L-methionine + phosphate + diphosphate. Its pathway is amino-acid biosynthesis; S-adenosyl-L-methionine biosynthesis; S-adenosyl-L-methionine from L-methionine: step 1/1. Catalyzes the formation of S-adenosylmethionine (AdoMet) from methionine and ATP. The overall synthetic reaction is composed of two sequential steps, AdoMet formation and the subsequent tripolyphosphate hydrolysis which occurs prior to release of AdoMet from the enzyme. The polypeptide is S-adenosylmethionine synthase (Thermosipho africanus (strain TCF52B)).